We begin with the raw amino-acid sequence, 119 residues long: Large ribosomal subunit protein bL19 (119 aa).

The protein belongs to the bacterial ribosomal protein bL19 family.

Functionally, this protein is located at the 30S-50S ribosomal subunit interface and may play a role in the structure and function of the aminoacyl-tRNA binding site. The chain is Large ribosomal subunit protein bL19 from Limosilactobacillus reuteri (strain DSM 20016) (Lactobacillus reuteri).